A 141-amino-acid chain; its full sequence is Large ribosomal subunit protein uL11 (141 aa).

This sequence belongs to the universal ribosomal protein uL11 family. As to quaternary structure, part of the ribosomal stalk of the 50S ribosomal subunit. Interacts with L10 and the large rRNA to form the base of the stalk. L10 forms an elongated spine to which L12 dimers bind in a sequential fashion forming a multimeric L10(L12)X complex. In terms of processing, one or more lysine residues are methylated.

Forms part of the ribosomal stalk which helps the ribosome interact with GTP-bound translation factors. This is Large ribosomal subunit protein uL11 from Clostridium acetobutylicum (strain ATCC 824 / DSM 792 / JCM 1419 / IAM 19013 / LMG 5710 / NBRC 13948 / NRRL B-527 / VKM B-1787 / 2291 / W).